The chain runs to 124 residues: Small ribosomal subunit protein uS12 (124 aa).

The residue at position 89 (Asp89) is a 3-methylthioaspartic acid. A disordered region spans residues 105 to 124 (QGVKNRKQARSRYGAKKEKS). Positions 108–118 (KNRKQARSRYG) are enriched in basic residues.

The protein belongs to the universal ribosomal protein uS12 family. Part of the 30S ribosomal subunit. Contacts proteins S8 and S17. May interact with IF1 in the 30S initiation complex.

Its function is as follows. With S4 and S5 plays an important role in translational accuracy. Functionally, interacts with and stabilizes bases of the 16S rRNA that are involved in tRNA selection in the A site and with the mRNA backbone. Located at the interface of the 30S and 50S subunits, it traverses the body of the 30S subunit contacting proteins on the other side and probably holding the rRNA structure together. The combined cluster of proteins S8, S12 and S17 appears to hold together the shoulder and platform of the 30S subunit. This is Small ribosomal subunit protein uS12 from Mycobacterium avium (strain 104).